We begin with the raw amino-acid sequence, 427 residues long: Gamma-glutamyl phosphate reductase (427 aa).

This sequence belongs to the gamma-glutamyl phosphate reductase family.

It localises to the cytoplasm. It catalyses the reaction L-glutamate 5-semialdehyde + phosphate + NADP(+) = L-glutamyl 5-phosphate + NADPH + H(+). It functions in the pathway amino-acid biosynthesis; L-proline biosynthesis; L-glutamate 5-semialdehyde from L-glutamate: step 2/2. Its function is as follows. Catalyzes the NADPH-dependent reduction of L-glutamate 5-phosphate into L-glutamate 5-semialdehyde and phosphate. The product spontaneously undergoes cyclization to form 1-pyrroline-5-carboxylate. The polypeptide is Gamma-glutamyl phosphate reductase (Anaeromyxobacter dehalogenans (strain 2CP-1 / ATCC BAA-258)).